The sequence spans 67 residues: Theromin (67 aa).

An Antistasin-like domain is found at 2–27; it reads CENTECPRACPGEYEFDEDGCNTCVC.

In terms of assembly, homodimer. Eight disulfide bonds are present.

Its subcellular location is the secreted. Its function is as follows. Potent thrombin-specific inhibitor. The chain is Theromin from Theromyzon tessulatum (Duck leech).